Consider the following 471-residue polypeptide: MSSETTAPMIINEKSSLPVKSEPGQLGNPISDESSEDEQSQIRALEEDQGIYYNEEVVASPKNESDDDIPLRRIQLSHQTSTQQHPEDSEPQEVIDVNDIELPAGEAQPNMERRRSVRFSGRHDEEEDGRNKHFRTPSPESLRYIQALENPMAANGEFEEEFNDLADPQVQPPPMGSPPAYTSADEGPKTPPPRASAGSNMRQESMNELIMRKISDPLQNLIRRASRLEDDSSNDDDDDDDDEDDDYTEDEIAILTYIDAYKTQEVELRPQLRPFTIEYIPAMGDVDLFIKVPRPDEIDDNVGLTQIDEPPSNQSDATIVDMQIRNATKDAAILDDDVPVKLLERADENPDEIKKWISDIKEFHKSKPAQTVHYRTQLPDVETLMQEWPQKLEEVLKTTKIPSAELDVSLEKYVEICLNIVDIPVGKSRIEALHLMFSLLNEFNNSQHFRNLAQNNNLGGETGETMDRLEL.

2 disordered regions span residues 1–202 and 226–246; these read MSSE…SNMR and SRLEDDSSNDDDDDDDDEDDD. 2 stretches are compositionally biased toward acidic residues: residues 89–99 and 231–246; these read SEPQEVIDVND and DSSNDDDDDDDDEDDD.

It belongs to the IFT46 family. As to quaternary structure, component of the IFT complex B composed of at least che-2, che-13, dyf-1, dyf-3, dyf-6, dyf-11, dyf-13, ift-20, ift-74, ift-81, ifta-2, osm-1, osm-5 and osm-6. As to expression, expressed in the hypodermis and sensory neurons including inner labial, PDE, amphid and phasmid neurons.

It is found in the cell projection. The protein resides in the cilium. Its subcellular location is the cytoplasm. The protein localises to the cytoskeleton. It localises to the cilium basal body. It is found in the dendrite. The protein resides in the perikaryon. Its function is as follows. Component of the intraflagellar transport (IFT) complex B required for transport of proteins in the motile cilium. May be required for ciliary entrance and transport of specific ciliary cargo proteins such as che-3 which are related to motility. Required for normal morphology and function of ciliated amphid sensory neurons. This is Intraflagellar transport protein 46 homolog from Caenorhabditis elegans.